Reading from the N-terminus, the 198-residue chain is DnaJ homolog subfamily C member 12 (198 aa).

An N-acetylmethionine modification is found at M1. Residues 14–79 (DYYTLLGCDE…ASRARYDHWR (66 aa)) enclose the J domain. The segment at 112 to 167 (MLEESDQTPTDKIENEEQDEQKEIKKEEFGSTTEKMEQKESKSVEKSFSPQNPDSP) is disordered. Basic and acidic residues predominate over residues 120–156 (PTDKIENEEQDEQKEIKKEEFGSTTEKMEQKESKSVE). Residues S160, S166, and S182 each carry the phosphoserine modification.

As to quaternary structure, interacts with HSPA8. Interacts with TPH1. Interacts with TPH2.

The protein resides in the cytoplasm. In terms of biological role, probable co-chaperone that participates in the proper folding of biopterin-dependent aromatic amino acid hydroxylases, which include phenylalanine-4-hydroxylase (PAH), tyrosine 3-monooxygenase (TH) and peripheral and neuronal tryptophan hydroxylases (TPH1 and TPH2). The sequence is that of DnaJ homolog subfamily C member 12 (DNAJC12) from Bos taurus (Bovine).